The sequence spans 312 residues: Chitin deacetylase 2 (312 aa).

Positions 1-44 (MRIQLNTIDLQCIIALSCLGQFVHAEANREDLKQIDFQFPVLER) are cleaved as a signal peptide. The cysteines at positions 117 and 300 are disulfide-linked. The NodB homology domain maps to 118-307 (SKLSQTFDDG…SHCVGGIDYI (190 aa)). Residue D125 is the Proton acceptor of the active site. D125 lines the acetate pocket. Residue D126 coordinates Co(2+). A glycan (N-linked (GlcNAc...) asparagine) is linked at N142. H172 and H176 together coordinate Co(2+). N181 and N199 each carry an N-linked (GlcNAc...) asparagine glycan. Y213 contributes to the acetate binding site. 2 N-linked (GlcNAc...) asparagine glycosylation sites follow: N246 and N263. The Proton donor role is filled by H273.

Belongs to the polysaccharide deacetylase family. In terms of assembly, monomer. Co(2+) serves as cofactor. Post-translationally, N-glycosylated.

The protein localises to the prospore. The enzyme catalyses [(1-&gt;4)-N-acetyl-beta-D-glucosaminyl](n) + n H2O = chitosan + n acetate. Its function is as follows. Hydrolyzes the N-acetamido groups of N-acetyl-D-glucosamine residues in chitin to form chitosan and acetate. Chitosan is a component of the spore wall. The sequence is that of Chitin deacetylase 2 from Saccharomyces cerevisiae (strain ATCC 204508 / S288c) (Baker's yeast).